Consider the following 103-residue polypeptide: CLAVATA3/ESR (CLE)-related protein 22 (103 aa).

Residues 1-34 (MGNYYSRRKSRKHITTVALIILLLLLFLFLYAKA) form the signal peptide. The segment at 37–103 (SSPNIHHHST…FTGPNPLHNR (67 aa)) is disordered. Basic residues predominate over residues 41-50 (IHHHSTHGSL). The span at 66-76 (NAASSRGSKYT) shows a compositional bias: polar residues. Hydroxyproline is present on proline 97. O-linked (Ara...) hydroxyproline glycosylation is present at proline 97.

This sequence belongs to the CLV3/ESR signal peptide family. The O-glycosylation (arabinosylation) of the hydroxyproline Pro-97 enhances binding affinity of the CLE22p peptide for its receptor. In terms of tissue distribution, mostly expressed in stems and apex, and, to a lower extent, in seedlings, leaves, flowers and siliques.

It localises to the secreted. The protein localises to the extracellular space. Its function is as follows. Extracellular signal peptide that regulates cell fate. Represses root apical meristem maintenance. The chain is CLAVATA3/ESR (CLE)-related protein 22 from Arabidopsis thaliana (Mouse-ear cress).